The following is a 236-amino-acid chain: Cancer/testis antigen 55 (236 aa).

Residues 57-84 (RSSADVETGDNPLKAEPNLPAAVEEQSP) form a disordered region.

As to quaternary structure, interacts with GABARAP; this interaction may be important for GABARAP protein stability. Interacts with LAMP2; this interaction may be important for LAMP2 protein stability. Expressed in spermatozoa (at protein level).

The protein resides in the cytoplasm. It is found in the cytoplasmic vesicle. The protein localises to the secretory vesicle. Its subcellular location is the acrosome. It localises to the cell projection. The protein resides in the cilium. It is found in the flagellum. Its function is as follows. Plays a role in spermatogenesis, possibly acting in the regulation of the autophagy pathway. The polypeptide is Cancer/testis antigen 55 (Ct55) (Mus musculus (Mouse)).